The sequence spans 392 residues: Cyclic di-GMP phosphodiesterase RocR (392 aa).

The region spanning 5 to 126 (NVLVLEDEPF…RITALLTRYN (122 aa)) is the Response regulatory domain. The residue at position 56 (D56) is a 4-aspartylphosphate. An EAL domain is found at 140–392 (ELPSVADVVR…QHFLDYCSGS (253 aa)). The Mg(2+) site is built by E175, N233, E265, and D295. Residue E352 is the Proton acceptor of the active site.

Homotetramer. Exhibits a highly unusual tetrameric structure arranged around a single dyad, with the four subunits adopting two distinctly different conformations, with only two active sites accessible for substrate binding. Interacts with RocS1. Mg(2+) serves as cofactor.

The catalysed reaction is 3',3'-c-di-GMP + H2O = 5'-phosphoguanylyl(3'-&gt;5')guanosine + H(+). Its activity is regulated as follows. Phosphorylation of Asp-56 probably induces local conformational changes in the response regulatory domain. These structural changes are transmitted to the adjacent EAL domain, then the signal is further transmitted down to the active site. The phosphodiesterase activity is inhibited by Ca(2+) and Zn(2+). Phosphodiesterase activity is inhibited by a benzoisothiazolinone derivative that specifically inhibited RocR, but not some other phosphodiesterases. Phosphodiesterase (PDE) that catalyzes the hydrolysis of cyclic diguanylate (c-di-GMP) to 5'-pGpG. Cannot use cyclic AMP or cyclic GMP. Part of the RocSAR two-component regulatory signaling system (also known as the SadARS system), which regulates biofilm maturation, type III secretion and expression of the cup fimbrial-gene cluster. Negatively regulates the expression of cup genes by antagonizing the activity of RocA1. In Pseudomonas aeruginosa (strain ATCC 15692 / DSM 22644 / CIP 104116 / JCM 14847 / LMG 12228 / 1C / PRS 101 / PAO1), this protein is Cyclic di-GMP phosphodiesterase RocR.